Here is a 499-residue protein sequence, read N- to C-terminus: 6-hydroxynicotinate reductase (499 aa).

2 4Fe-4S ferredoxin-type domains span residues 1–29 and 31–61; these read MFKI…YEKK and KGAI…NDAP. Residues C9, C12, C15, C19, C41, C44, C47, and C51 each contribute to the [4Fe-4S] cluster site.

In terms of assembly, homotetramer. An oxidized flavin serves as cofactor. [2Fe-2S] cluster is required as a cofactor. It depends on [4Fe-4S] cluster as a cofactor.

It carries out the reaction 1,4,5,6-tetrahydro-6-oxonicotinate + oxidized 2[4Fe-4S]-[ferredoxin] = 6-hydroxynicotinate + reduced 2[4Fe-4S]-[ferredoxin] + 2 H(+). The protein operates within cofactor degradation; nicotinate degradation; propanoate and pyruvate from 6-hydroxynicotinate: step 1/8. In terms of biological role, catalyzes the reversible reduction of 6-hydroxynicotinate to 6-oxo-1,4,5,6-tetrahydronicotinate. This chain is 6-hydroxynicotinate reductase, found in Eubacterium barkeri (Clostridium barkeri).